A 331-amino-acid polypeptide reads, in one-letter code: Glucokinase (331 aa).

Residue 14–19 (GDIGGT) participates in ATP binding.

Belongs to the bacterial glucokinase family.

It is found in the cytoplasm. It carries out the reaction D-glucose + ATP = D-glucose 6-phosphate + ADP + H(+). This is Glucokinase from Aromatoleum aromaticum (strain DSM 19018 / LMG 30748 / EbN1) (Azoarcus sp. (strain EbN1)).